A 405-amino-acid polypeptide reads, in one-letter code: Prostaglandin E2 receptor EP1 subtype (405 aa).

The Extracellular portion of the chain corresponds to 1 to 39; that stretch reads MSPCGLNLSLADEAATCATPRLPNTSVVLPTGDNGTSPA. Residues Asn-7, Asn-24, and Asn-34 are each glycosylated (N-linked (GlcNAc...) asparagine). The chain crosses the membrane as a helical span at residues 40-62; it reads LPIFSMTLGAVSNVLALALLAQV. Topologically, residues 63 to 80 are cytoplasmic; sequence AGRMRRRRSAATFLLFVA. A helical transmembrane segment spans residues 81 to 99; it reads SLLAIDLAGHVIPGALVLR. Over 100-113 the chain is Extracellular; the sequence is LYTAGRAPAGGACH. Residues Cys-112 and Cys-190 are joined by a disulfide bond. The chain crosses the membrane as a helical span at residues 114 to 135; that stretch reads FLGGCMVFFGLCPLLLGCGMAV. The Cytoplasmic portion of the chain corresponds to 136 to 157; the sequence is ERCVGVTQPLIHAARVSVARAR. A helical membrane pass occupies residues 158-179; that stretch reads LALAVLAAMALAVALLPLVHVG. Topologically, residues 180–202 are extracellular; that stretch reads RYELQYPGTWCFISLGPRGGWRQ. A helical transmembrane segment spans residues 203–228; that stretch reads ALLAGLFAGLGLAALLAALVCNTLSG. The Cytoplasmic portion of the chain corresponds to 229–301; that stretch reads LALLRARWRR…HAHDVEMVGQ (73 aa). The interval 243 to 287 is disordered; that stretch reads RFRKTAGPDDRRRWGSRGPRLASASSASSITSATATLRSSRGGGS. A compositionally biased stretch (low complexity) spans 262–282; that stretch reads RLASASSASSITSATATLRSS. A helical membrane pass occupies residues 302–323; the sequence is LVGIMVVSCICWSPLLVLVVLA. Over 324–337 the chain is Extracellular; it reads IGGWNSNSLQRPLF. Residues 338–357 form a helical membrane-spanning segment; that stretch reads LAVRLASWNQILDPWVYILL. Topologically, residues 358-405 are cytoplasmic; it reads RQAMLRQLLRLLPLRVSAKGGPTELGLTKSAWEASSLRSSRHSGFSHL.

Belongs to the G-protein coupled receptor 1 family. Post-translationally, phosphorylated. As to expression, abundant in kidney and in a lesser amount in lung.

The protein localises to the cell membrane. Functionally, receptor for prostaglandin E2 (PGE2). The activity of this receptor is mediated by G(q) proteins which activate a phosphatidylinositol-calcium second messenger system. May play a role as an important modulator of renal function. Implicated the smooth muscle contractile response to PGE2 in various tissues. The sequence is that of Prostaglandin E2 receptor EP1 subtype (Ptger1) from Mus musculus (Mouse).